The sequence spans 72 residues: Arrestin-E (72 aa).

Belongs to the arrestin family. Adrenal, cerebral cortex, heart, hypothalamus, intestine, liver, lung, pituitary, retina and testis.

This Rattus norvegicus (Rat) protein is Arrestin-E (Ear).